The chain runs to 389 residues: Probable nitrate transporter NarT (389 aa).

The next 12 membrane-spanning stretches (helical) occupy residues 14-34, 45-65, 69-89, 97-117, 139-159, 161-181, 211-231, 246-266, 268-288, 294-314, 331-351, and 353-373; these read TLSL…MPFI, ISII…PFGY, IVGA…PIFF, GMLM…SVGV, GNIG…IIGW, TTVR…FIFG, WYFI…NYLV, GVFI…GDKF, AVKV…ILGI, LFTV…GLIF, IVSM…TYVA, and LTGS…IALF.

This sequence belongs to the major facilitator superfamily. Nitrate/nitrite porter (TC 2.A.1.8) family.

It is found in the cell membrane. Functionally, probably required for nitrate uptake under anoxic conditions. Also possibly involved in excretion of nitrite produced by the dissimilatory reduction of nitrate. The chain is Probable nitrate transporter NarT (narT) from Staphylococcus aureus (strain MRSA252).